A 350-amino-acid polypeptide reads, in one-letter code: Fe-S cluster assembly protein dre2 (350 aa).

The segment at 23–156 (TSFNLRTLLL…KPDHSASVAV (134 aa)) is N-terminal SAM-like domain. Positions 157–242 (PLRLRRKDNS…EDTLLTEEDM (86 aa)) are linker. The interval 165 to 209 (NSKTTAVSNAGPPVSTVEVPVSGKRKSVDMTEDVPEKDVPKNDVP) is disordered. Basic and acidic residues predominate over residues 190-208 (KSVDMTEDVPEKDVPKNDV). Residues Cys-252, Cys-263, Cys-266, and Cys-268 each coordinate [2Fe-2S] cluster. The fe-S binding site A stretch occupies residues 252–268 (CAPRAGKRRRACKDCTC). [4Fe-4S] cluster is bound by residues Cys-313, Cys-316, Cys-324, and Cys-327. 2 consecutive short sequence motifs (cx2C motif) follow at residues 313 to 316 (CGNC) and 324 to 327 (CDGC). The interval 313–327 (CGNCSLGDAFRCDGC) is fe-S binding site B.

It belongs to the anamorsin family. As to quaternary structure, monomer. Interacts with TAH18. Interacts with MIA40. Requires [2Fe-2S] cluster as cofactor. The cofactor is [4Fe-4S] cluster.

It is found in the cytoplasm. The protein localises to the mitochondrion intermembrane space. In terms of biological role, component of the cytosolic iron-sulfur (Fe-S) protein assembly (CIA) machinery required for the maturation of extramitochondrial Fe-S proteins. Part of an electron transfer chain functioning in an early step of cytosolic Fe-S biogenesis, facilitating the de novo assembly of a [4Fe-4S] cluster on the scaffold complex CFD1-NBP35. Electrons are transferred to DRE2 from NADPH via the FAD- and FMN-containing protein TAH18. TAH18-DRE2 are also required for the assembly of the diferric tyrosyl radical cofactor of ribonucleotide reductase (RNR), probably by providing electrons for reduction during radical cofactor maturation in the catalytic small subunit RNR2. This chain is Fe-S cluster assembly protein dre2, found in Sclerotinia sclerotiorum (strain ATCC 18683 / 1980 / Ss-1) (White mold).